The following is a 479-amino-acid chain: HSPB1-associated protein 1 (479 aa).

The segment at methionine 1–valine 25 is disordered. The interval glutamate 88–arginine 208 is interaction with HSPB1. Residues tryptophan 124–threonine 288 form the JmjC domain. Residues proline 347–asparagine 412 are disordered. Basic and acidic residues predominate over residues valine 356 to serine 369.

In terms of assembly, interacts with CRYAB and HSPB1. As to expression, widely expressed. Highly expressed by Sertoli cells in testis (at protein level).

The protein resides in the cytoplasm. Functionally, may play a role in cellular stress response. This chain is HSPB1-associated protein 1 (Hspbap1), found in Rattus norvegicus (Rat).